A 567-amino-acid chain; its full sequence is Glucose-6-phosphate isomerase, cytosolic B (567 aa).

Residues 156 to 157 (GS), 212 to 217 (SKTFTT), Gln-356, Glu-360, His-391, and Lys-516 each bind D-glucose 6-phosphate. Glu-360 serves as the catalytic Proton donor. Residues His-391 and Lys-516 contribute to the active site.

Belongs to the GPI family. Homodimer.

It is found in the cytoplasm. The catalysed reaction is alpha-D-glucose 6-phosphate = beta-D-fructose 6-phosphate. The protein operates within carbohydrate degradation; glycolysis; D-glyceraldehyde 3-phosphate and glycerone phosphate from D-glucose: step 2/4. In terms of biological role, catalyzes the conversion of glucose-6-phosphate to fructose-6-phosphate, the second step in glycolysis, and the reverse reaction during gluconeogenesis. In Oryza sativa subsp. japonica (Rice), this protein is Glucose-6-phosphate isomerase, cytosolic B.